The following is a 333-amino-acid chain: Beta-ketoacyl-[acyl-carrier-protein] synthase III (333 aa).

Residues Cys-116 and His-258 contribute to the active site. The interval 259–263 is ACP-binding; that stretch reads QANKR. Asn-288 is a catalytic residue.

The protein belongs to the thiolase-like superfamily. FabH family. In terms of assembly, homodimer.

It localises to the cytoplasm. It carries out the reaction malonyl-[ACP] + acetyl-CoA + H(+) = 3-oxobutanoyl-[ACP] + CO2 + CoA. Its pathway is lipid metabolism; fatty acid biosynthesis. Catalyzes the condensation reaction of fatty acid synthesis by the addition to an acyl acceptor of two carbons from malonyl-ACP. Catalyzes the first condensation reaction which initiates fatty acid synthesis and may therefore play a role in governing the total rate of fatty acid production. Possesses both acetoacetyl-ACP synthase and acetyl transacylase activities. Its substrate specificity determines the biosynthesis of branched-chain and/or straight-chain of fatty acids. This is Beta-ketoacyl-[acyl-carrier-protein] synthase III from Koribacter versatilis (strain Ellin345).